Reading from the N-terminus, the 264-residue chain is uncharacterized protein (264 aa).

This is an uncharacterized protein from Escherichia coli (strain K12).